The primary structure comprises 99 residues: U2-theraphotoxin-Lsp1a (99 aa).

The signal sequence occupies residues 1 to 22 (MNTIQVIIFAVVLVLTVTVGQA). A propeptide spanning residues 23-57 (DEDSPEASLLRKLKEAEASLFGQNLEESRNSRQKR) is cleaved from the precursor. Cystine bridges form between C58–C73, C65–C78, and C72–C93.

This sequence belongs to the neurotoxin 14 (magi-1) family. 08 (Ltx-4) subfamily. As to expression, expressed by the venom gland.

It is found in the secreted. Its function is as follows. Insecticidal neurotoxin. The polypeptide is U2-theraphotoxin-Lsp1a (Lasiodora sp. (strain IBSP 8539) (Brazilian salmon pink birdeater)).